Here is a 51-residue protein sequence, read N- to C-terminus: Large ribosomal subunit protein eL39 (51 aa).

Belongs to the eukaryotic ribosomal protein eL39 family.

This Pyrococcus horikoshii (strain ATCC 700860 / DSM 12428 / JCM 9974 / NBRC 100139 / OT-3) protein is Large ribosomal subunit protein eL39 (rpl39e).